The chain runs to 329 residues: tRNA (guanine(10)-N2)-dimethyltransferase (329 aa).

Residues 40–143 (NVENVEIFER…KLWIGIRIRE (104 aa)) enclose the THUMP domain.

The protein belongs to the methyltransferase superfamily. Trm-G10 family. As to quaternary structure, monomer.

Its subcellular location is the cytoplasm. The catalysed reaction is guanosine(10) in tRNA + 2 S-adenosyl-L-methionine = N(2)-dimethylguanosine(10) in tRNA + 2 S-adenosyl-L-homocysteine + 2 H(+). In terms of biological role, catalyzes the adenosylmethionine-dependent methylation of the exocyclic amino group (N(2)) of guanosine at position 10 of various tRNAs. Acts via a two-step process that leads to the formation of either N(2)-monomethyl (m(2)G) or N(2)-dimethylguanosine (m(2)(2)G). The protein is tRNA (guanine(10)-N2)-dimethyltransferase (trmG10) of Pyrococcus abyssi (strain GE5 / Orsay).